Reading from the N-terminus, the 520-residue chain is Glutamyl-tRNA(Gln) amidotransferase subunit A (520 aa).

Active-site charge relay system residues include K80 and S155. Residue S179 is the Acyl-ester intermediate of the active site.

This sequence belongs to the amidase family. GatA subfamily. As to quaternary structure, heterotrimer of A, B and C subunits.

It catalyses the reaction L-glutamyl-tRNA(Gln) + L-glutamine + ATP + H2O = L-glutaminyl-tRNA(Gln) + L-glutamate + ADP + phosphate + H(+). Allows the formation of correctly charged Gln-tRNA(Gln) through the transamidation of misacylated Glu-tRNA(Gln) in organisms which lack glutaminyl-tRNA synthetase. The reaction takes place in the presence of glutamine and ATP through an activated gamma-phospho-Glu-tRNA(Gln). This Renibacterium salmoninarum (strain ATCC 33209 / DSM 20767 / JCM 11484 / NBRC 15589 / NCIMB 2235) protein is Glutamyl-tRNA(Gln) amidotransferase subunit A.